The chain runs to 426 residues: Serine--tRNA ligase (426 aa).

Position 230–232 (230–232 (TSE)) interacts with L-serine. 261-263 (RSE) contributes to the ATP binding site. Glutamate 284 is a binding site for L-serine. 348 to 351 (EISS) serves as a coordination point for ATP. L-serine is bound at residue serine 384.

Belongs to the class-II aminoacyl-tRNA synthetase family. Type-1 seryl-tRNA synthetase subfamily. Homodimer. The tRNA molecule binds across the dimer.

The protein resides in the cytoplasm. The enzyme catalyses tRNA(Ser) + L-serine + ATP = L-seryl-tRNA(Ser) + AMP + diphosphate + H(+). The catalysed reaction is tRNA(Sec) + L-serine + ATP = L-seryl-tRNA(Sec) + AMP + diphosphate + H(+). The protein operates within aminoacyl-tRNA biosynthesis; selenocysteinyl-tRNA(Sec) biosynthesis; L-seryl-tRNA(Sec) from L-serine and tRNA(Sec): step 1/1. Functionally, catalyzes the attachment of serine to tRNA(Ser). Is also able to aminoacylate tRNA(Sec) with serine, to form the misacylated tRNA L-seryl-tRNA(Sec), which will be further converted into selenocysteinyl-tRNA(Sec). This is Serine--tRNA ligase from Sphingopyxis alaskensis (strain DSM 13593 / LMG 18877 / RB2256) (Sphingomonas alaskensis).